The primary structure comprises 537 residues: GTPase LSG1-1 (537 aa).

Residues 158–362 (WRQLWRVLER…LCDCPGLVFP (205 aa)) enclose the CP-type G domain. The short motif at 176-180 (DARDP) is the DARXP motif element. Positions 206-209 (NKAD) are G4. 206–209 (NKAD) is a GTP binding site. A G5 region spans residues 234-236 (SAK). The tract at residues 311 to 318 (GYPNVGKS) is G1. Position 314–319 (314–319 (NVGKSS)) interacts with GTP. A G2 region spans residues 337 to 341 (GKTKH). Positions 355–358 (DCPG) are G3. Position 358 (glycine 358) interacts with GTP. The segment at 484–508 (LGAETREGSQTEKKGEEAPSLGLDQ) is disordered. Positions 487 to 500 (ETREGSQTEKKGEE) are enriched in basic and acidic residues.

Belongs to the TRAFAC class YlqF/YawG GTPase family. Ubiquitous, with the highest expression in stem and hypsophyll on day 66.

Its subcellular location is the cytoplasm. Functionally, GTPase that might be redundant with LSG1-2 for ribosome biogenesis. Binds to 23S rRNA. The polypeptide is GTPase LSG1-1 (Arabidopsis thaliana (Mouse-ear cress)).